The sequence spans 103 residues: Nucleoid-associated protein Anae109_3761 (103 aa).

The protein belongs to the YbaB/EbfC family. Homodimer.

It localises to the cytoplasm. The protein localises to the nucleoid. In terms of biological role, binds to DNA and alters its conformation. May be involved in regulation of gene expression, nucleoid organization and DNA protection. The sequence is that of Nucleoid-associated protein Anae109_3761 from Anaeromyxobacter sp. (strain Fw109-5).